The following is a 219-amino-acid chain: MFTFNTIEEALKSLQNGEMIIVTDDENRENEGDLICAAEYATTENVNFMAKYGRGLICMPMGRSLVEKLCLPPMVLKNTDNHETAFTVSIDHVDTTTGISAVERGITARKCIDPNARPEDFRRPGHMFPLQAKDNGVFEREGHTEATVDLMKLAGLREAGLCCEIMADNGEMMRTPELISMAKQYNLTFVTIKDLQAYRRKQEASALAVEQKNMSPMDC.

D-ribulose 5-phosphate is bound by residues 28 to 29, aspartate 33, 140 to 144, and glutamate 164; these read RE and REGHT. A Mg(2+)-binding site is contributed by glutamate 29. Mg(2+) is bound at residue histidine 143.

This sequence belongs to the DHBP synthase family. In terms of assembly, homodimer. Requires Mg(2+) as cofactor. Mn(2+) is required as a cofactor.

It carries out the reaction D-ribulose 5-phosphate = (2S)-2-hydroxy-3-oxobutyl phosphate + formate + H(+). Its pathway is cofactor biosynthesis; riboflavin biosynthesis; 2-hydroxy-3-oxobutyl phosphate from D-ribulose 5-phosphate: step 1/1. Its function is as follows. Catalyzes the conversion of D-ribulose 5-phosphate to formate and 3,4-dihydroxy-2-butanone 4-phosphate. The sequence is that of 3,4-dihydroxy-2-butanone 4-phosphate synthase from Methanocorpusculum labreanum (strain ATCC 43576 / DSM 4855 / Z).